We begin with the raw amino-acid sequence, 402 residues long: L-threonine ammonia-lyase (402 aa).

K51 carries the post-translational modification N6-(pyridoxal phosphate)lysine. Residues N78, 178–181, and S302 contribute to the pyridoxal 5'-phosphate site; that span reads GGGL. Residues 327–402 form the ACT domain; sequence KLKVELDDLP…GVGYLVDVLK (76 aa).

It belongs to the serine/threonine dehydratase family. Requires pyridoxal 5'-phosphate as cofactor.

It catalyses the reaction L-threonine = 2-oxobutanoate + NH4(+). The enzyme catalyses L-serine = pyruvate + NH4(+). Its pathway is amino-acid biosynthesis; L-isoleucine biosynthesis; 2-oxobutanoate from L-threonine: step 1/1. Functionally, catalyzes the conversion of threonine to 2-oxobutanoate and ammonia. Functions in the threonine-dependent pathway of isoleucine biosynthesis, which is the minor pathway for isoleucine biosynthesis in G.sulfurreducens. Also displays serine ammonia-lyase activity, yielding pyruvate from L-serine. In Geobacter sulfurreducens (strain ATCC 51573 / DSM 12127 / PCA), this protein is L-threonine ammonia-lyase.